Here is a 502-residue protein sequence, read N- to C-terminus: Actin-binding protein WASF3 (502 aa).

Residues 57–93 adopt a coiled-coil conformation; sequence NEANNFYIRANSLQDRIDRLAVKVTQLDSTVEEVSLQ. Residue tyrosine 151 is modified to Phosphotyrosine; by ABL1. The stretch at 162-206 forms a coiled coil; sequence KEKMLQDTEDKRKEKRRQKEQKRIDGTTREVKKVRKARNRRQEWN. 2 disordered regions span residues 169 to 210 and 223 to 443; these read TEDK…MMAY and SVYH…ARSD. Residues 182-192 show a composition bias toward basic and acidic residues; sequence QKRIDGTTREV. Residues 223-237 show a composition bias toward polar residues; the sequence is SVYHGASSEGSLSPD. Tyrosine 248 is subject to Phosphotyrosine; by ABL1. Residues 302-312 are compositionally biased toward pro residues; sequence QQPPPPPPPQA. Phosphotyrosine; by ABL1 is present on tyrosine 337. Composition is skewed to pro residues over residues 341–352 and 394–410; these read SGPPPPPPPPVI and APPPPGPPPPPPGPPGP. Over residues 411–423 the composition is skewed to low complexity; sequence GSSLSSSPMHGPP. The region spanning 440–457 is the WH2 domain; the sequence is ARSDLLAAIRMGIQLKKV. The residue at position 486 (tyrosine 486) is a Phosphotyrosine; by ABL1.

It belongs to the SCAR/WAVE family. As to quaternary structure, binds actin and the Arp2/3 complex. Phosphorylation by ABL1 promotes lamellipodia formation and cell migration. As to expression, expressed in ovary and brain.

The protein resides in the cytoplasm. The protein localises to the cytoskeleton. Downstream effector molecules involved in the transmission of signals from tyrosine kinase receptors and small GTPases to the actin cytoskeleton. Plays a role in the regulation of cell morphology and cytoskeletal organization. Required in the control of cell shape. The chain is Actin-binding protein WASF3 (WASF3) from Homo sapiens (Human).